Reading from the N-terminus, the 63-residue chain is Conotoxin LeDr243 (63 aa).

A signal peptide spans 1–22; the sequence is MRCLPVFVILLLLIASTPSIDA. Residues 23 to 47 constitute a propeptide that is removed on maturation; that stretch reads RPKTKDDMPLASFNDNAKRILQILS. At Cys60 the chain carries Cysteine amide. A propeptide spanning residues 62 to 63 is cleaved from the precursor; sequence LG.

This sequence belongs to the conotoxin T superfamily. In terms of processing, contains 2 disulfide bonds that can be either 'C1-C3, C2-C4' or 'C1-C4, C2-C3', since these disulfide connectivities have been observed for conotoxins with cysteine framework V (for examples, see AC P0DQQ7 and AC P81755). In terms of tissue distribution, expressed by the venom duct.

It localises to the secreted. The protein is Conotoxin LeDr243 of Conus litteratus (Lettered cone).